We begin with the raw amino-acid sequence, 591 residues long: Lysyl oxidase homolog 1 (591 aa).

A signal peptide spans 1–22; that stretch reads MALALTGWQLVWGACVCVLVHG. Residues 23-91 constitute a propeptide that is removed on maturation; the sequence is QQAPPGQGSD…PRRRGGLRRR (69 aa). 2 disordered regions span residues 77–107 and 233–373; these read APQA…SDTV and EYGG…RLSV. The segment covering 82 to 92 has biased composition (basic residues); the sequence is PRRRGGLRRRQ. Over residues 298–313 the composition is skewed to gly residues; the sequence is NGGGGGGTYGGGGGDP. Residues 319-386 are interaction with FBLN5; sequence PPYGNMPPEA…YRPNQNGRGL (68 aa). Positions 387-591 are lysyl-oxidase like; that stretch reads PDLVPDPNYV…STTNCKIVQS (205 aa). Intrachain disulfides connect cysteine 412–cysteine 418, cysteine 465–cysteine 514, cysteine 498–cysteine 504, cysteine 525–cysteine 535, and cysteine 572–cysteine 586. Histidine 466, histidine 468, and histidine 470 together coordinate Cu cation. Residues 494 to 529 constitute a cross-link (lysine tyrosylquinone (Lys-Tyr)); it reads KASFCLEDSTCDFGNLKRYACTSHTQGLSPGCYDTY. At tyrosine 529 the chain carries 2',4',5'-topaquinone.

This sequence belongs to the lysyl oxidase family. Interacts (via propeptide) with EFEMP2. Interacts with FBLN5. It depends on Cu cation as a cofactor. Lysine tyrosylquinone residue serves as cofactor. In terms of processing, the lysine tyrosylquinone cross-link (LTQ) is generated by condensation of the epsilon-amino group of a lysine with a topaquinone produced by oxidation of tyrosine. Post-translationally, proteolytic processing by a furin-like protease causes removal of N-terminal propeptide resulting in an enzyme largely inactive, but further proteolytic processing by BMP1 results in enzyme activation.

It is found in the secreted. The protein localises to the extracellular space. Its subcellular location is the extracellular matrix. The enzyme catalyses L-lysyl-[protein] + O2 + H2O = (S)-2-amino-6-oxohexanoyl-[protein] + H2O2 + NH4(+). Its function is as follows. Catalyzes the oxidative deamination of lysine and hydroxylysine residues in collagen and elastin, resulting in the formation of covalent cross-linkages, and the stabilization of collagen and elastin fibers. Essential for the elastic fiber homeostasis and for their maintenance at adult age. The protein is Lysyl oxidase homolog 1 (LOXL1) of Bos taurus (Bovine).